A 217-amino-acid chain; its full sequence is Peptide methionine sulfoxide reductase MsrA 1 (217 aa).

Cysteine 57 is an active-site residue.

The protein belongs to the MsrA Met sulfoxide reductase family.

The catalysed reaction is L-methionyl-[protein] + [thioredoxin]-disulfide + H2O = L-methionyl-(S)-S-oxide-[protein] + [thioredoxin]-dithiol. It carries out the reaction [thioredoxin]-disulfide + L-methionine + H2O = L-methionine (S)-S-oxide + [thioredoxin]-dithiol. Its function is as follows. Has an important function as a repair enzyme for proteins that have been inactivated by oxidation. Catalyzes the reversible oxidation-reduction of methionine sulfoxide in proteins to methionine. The sequence is that of Peptide methionine sulfoxide reductase MsrA 1 (msrA1) from Rhizobium meliloti (strain 1021) (Ensifer meliloti).